A 348-amino-acid polypeptide reads, in one-letter code: Oxygen-dependent coproporphyrinogen-III oxidase (348 aa).

Residue serine 104 participates in substrate binding. Residues histidine 108 and histidine 118 each coordinate a divalent metal cation. Residue histidine 118 is the Proton donor of the active site. Asparagine 120 to arginine 122 is a binding site for substrate. A divalent metal cation contacts are provided by histidine 152 and histidine 182. Positions tyrosine 272–glutamate 307 are important for dimerization.

The protein belongs to the aerobic coproporphyrinogen-III oxidase family. Homodimer. Requires a divalent metal cation as cofactor.

It is found in the cytoplasm. It carries out the reaction coproporphyrinogen III + O2 + 2 H(+) = protoporphyrinogen IX + 2 CO2 + 2 H2O. The protein operates within porphyrin-containing compound metabolism; protoporphyrin-IX biosynthesis; protoporphyrinogen-IX from coproporphyrinogen-III (O2 route): step 1/1. In terms of biological role, involved in the heme and chlorophyll biosynthesis. Catalyzes the aerobic oxidative decarboxylation of propionate groups of rings A and B of coproporphyrinogen-III to yield the vinyl groups in protoporphyrinogen-IX. The protein is Oxygen-dependent coproporphyrinogen-III oxidase of Prochlorococcus marinus (strain NATL2A).